The sequence spans 662 residues: p-hydroxybenzoic acid efflux pump subunit AaeB (662 aa).

The next 11 helical transmembrane spans lie at 22-42 (FAFKLSFAIVLSLFLGFHLQL), 52-72 (AAIVAAGPAFAAGGEPFSGAI), 76-96 (GMLRVVGTFIGCIGALIIIIA), 102-122 (VVMLMLCCIWAGLCTWVSSLV), 129-149 (VFGLAGYTTLIIIVSTQGTPL), 161-181 (EIVLGIVCAILADLLFSPRSI), 378-398 (LFWLSTGWTSGSVCMVMIAVV), 415-435 (FLFGTIYALPLGALMFMFIMP), 439-459 (QSMLLLCLSLGAMAFFLGLEV), 467-487 (LGALASTINILVLDNPMTFHI), and 491-511 (LDSAIGQIIGCFLALMVILLI).

Belongs to the aromatic acid exporter ArAE (TC 2.A.85) family.

It is found in the cell inner membrane. Forms an efflux pump with AaeA. Could function as a metabolic relief valve, allowing to eliminate certain compounds when they accumulate to high levels in the cell. The chain is p-hydroxybenzoic acid efflux pump subunit AaeB from Pectobacterium carotovorum subsp. carotovorum (strain PC1).